The primary structure comprises 250 residues: Phosphoribosylaminoimidazole-succinocarboxamide synthase (250 aa).

It belongs to the SAICAR synthetase family.

The catalysed reaction is 5-amino-1-(5-phospho-D-ribosyl)imidazole-4-carboxylate + L-aspartate + ATP = (2S)-2-[5-amino-1-(5-phospho-beta-D-ribosyl)imidazole-4-carboxamido]succinate + ADP + phosphate + 2 H(+). It participates in purine metabolism; IMP biosynthesis via de novo pathway; 5-amino-1-(5-phospho-D-ribosyl)imidazole-4-carboxamide from 5-amino-1-(5-phospho-D-ribosyl)imidazole-4-carboxylate: step 1/2. This is Phosphoribosylaminoimidazole-succinocarboxamide synthase from Chloroflexus aggregans (strain MD-66 / DSM 9485).